We begin with the raw amino-acid sequence, 322 residues long: Hydrolase C26A3.11 (322 aa).

The CN hydrolase domain maps to 44-290 (FRIGLVQLAN…PSIVYADIDP (247 aa)). Glutamate 83 functions as the Proton acceptor in the catalytic mechanism. Lysine 154 serves as the catalytic Proton donor. Cysteine 195 (nucleophile) is an active-site residue.

This sequence belongs to the carbon-nitrogen hydrolase superfamily. NIT1/NIT2 family.

The sequence is that of Hydrolase C26A3.11 from Schizosaccharomyces pombe (strain 972 / ATCC 24843) (Fission yeast).